The primary structure comprises 576 residues: Polypeptide N-acetylgalactosaminyltransferase 12 (576 aa).

Topologically, residues 1-19 (MWGRAVRRRCPRGLRRGRE) are cytoplasmic. Residues 20–37 (ALLALLALAGLGALLRAR) form a helical; Signal-anchor for type II membrane protein membrane-spanning segment. Positions 38–58 (SRSGTVDPGPPRTPLPGRHEP) are disordered. The Lumenal portion of the chain corresponds to 38 to 576 (SRSGTVDPGP…QRWFFKERMS (539 aa)). 5 disulfide bridges follow: Cys-120–Cys-353, Cys-344–Cys-417, Cys-453–Cys-474, Cys-501–Cys-516, and Cys-542–Cys-561. Residues 130 to 239 (LPKTSVVIAF…EGWLEPLLQR (110 aa)) are catalytic subdomain A. Substrate contacts are provided by Asp-171 and Arg-200. Mn(2+) contacts are provided by Asp-223 and His-225. The interval 299–361 (VIRSPTMAGG…PCSHVGHVFP (63 aa)) is catalytic subdomain B. Trp-330 serves as a coordination point for substrate. His-358 provides a ligand contact to Mn(2+). Tyr-366 is a substrate binding site. A Ricin B-type lectin domain is found at 440 to 572 (FFGMLQNRGL…NSDNQRWFFK (133 aa)).

It belongs to the glycosyltransferase 2 family. GalNAc-T subfamily. Mn(2+) serves as cofactor.

It localises to the golgi apparatus membrane. The enzyme catalyses L-seryl-[protein] + UDP-N-acetyl-alpha-D-galactosamine = a 3-O-[N-acetyl-alpha-D-galactosaminyl]-L-seryl-[protein] + UDP + H(+). It catalyses the reaction L-threonyl-[protein] + UDP-N-acetyl-alpha-D-galactosamine = a 3-O-[N-acetyl-alpha-D-galactosaminyl]-L-threonyl-[protein] + UDP + H(+). It participates in protein modification; protein glycosylation. Catalyzes the initial reaction in O-linked oligosaccharide biosynthesis, the transfer of an N-acetyl-D-galactosamine residue to a serine or threonine residue on the protein receptor. Has activity toward non-glycosylated peptides such as Muc5AC, Muc1a and EA2, and no detectable activity with Muc2 and Muc7. Displays enzymatic activity toward the Gal-NAc-Muc5AC glycopeptide, but no detectable activity to mono-GalNAc-glycosylated Muc1a, Muc2, Muc7 and EA2. May play an important role in the initial step of mucin-type oligosaccharide biosynthesis in digestive organs. The protein is Polypeptide N-acetylgalactosaminyltransferase 12 (Galnt12) of Mus musculus (Mouse).